The sequence spans 236 residues: Uridylate kinase (236 aa).

Residue 8–11 (KLSG) coordinates ATP. G51 lines the UMP pocket. ATP contacts are provided by G52 and R56. UMP is bound by residues D71 and 133 to 140 (TGRPFFTT). ATP-binding residues include N161, F167, and D170.

It belongs to the UMP kinase family. As to quaternary structure, homohexamer.

The protein localises to the cytoplasm. It catalyses the reaction UMP + ATP = UDP + ADP. Its pathway is pyrimidine metabolism; CTP biosynthesis via de novo pathway; UDP from UMP (UMPK route): step 1/1. With respect to regulation, inhibited by UTP. Catalyzes the reversible phosphorylation of UMP to UDP. This Mesomycoplasma hyopneumoniae (strain 232) (Mycoplasma hyopneumoniae) protein is Uridylate kinase.